A 350-amino-acid chain; its full sequence is Sperm equatorial segment protein 1 (350 aa).

Positions 1–19 (MKPLVLLVALLLWPSSVPA) are cleaved as a signal peptide. Asn128 carries N-linked (GlcNAc...) asparagine glycosylation.

It belongs to the SPESP1 family. Glycosylated. In testis there are two predominant forms of 77- and 67-kDa and a form of 47-kDa, whereas in epididymal sperm from caput, corpus, and cauda there are two forms of 47- and 43-kDa. Testis forms contain complex carbohydrate residues. Epididymal sperm forms are N-glycosylated. Then undergoes significant glycosylation in the testis and that the majority of these glycoconjugates are removed by the time sperm reach the caput epididymis. Highly expressed in testis, where it is localized in the acrosome of postmeiotic stages of spermiogenesis (round and elongating spermatids and in ejaculated spermatozoa) (at protein level). Poorly expressed in placenta and fetal lung.

It is found in the cytoplasmic vesicle. Its subcellular location is the secretory vesicle. The protein resides in the acrosome. Involved in fertilization ability of sperm. The protein is Sperm equatorial segment protein 1 of Homo sapiens (Human).